The chain runs to 408 residues: CinA-like protein (408 aa).

The protein belongs to the CinA family.

The sequence is that of CinA-like protein from Thermotoga maritima (strain ATCC 43589 / DSM 3109 / JCM 10099 / NBRC 100826 / MSB8).